Consider the following 140-residue polypeptide: Nucleoside diphosphate kinase (140 aa).

Residues Lys-9, Phe-57, Arg-85, Thr-91, Arg-102, and Asn-112 each contribute to the ATP site. The Pros-phosphohistidine intermediate role is filled by His-115.

This sequence belongs to the NDK family. As to quaternary structure, homotetramer. Mg(2+) serves as cofactor.

Its subcellular location is the cytoplasm. The enzyme catalyses a 2'-deoxyribonucleoside 5'-diphosphate + ATP = a 2'-deoxyribonucleoside 5'-triphosphate + ADP. It catalyses the reaction a ribonucleoside 5'-diphosphate + ATP = a ribonucleoside 5'-triphosphate + ADP. Its function is as follows. Major role in the synthesis of nucleoside triphosphates other than ATP. The ATP gamma phosphate is transferred to the NDP beta phosphate via a ping-pong mechanism, using a phosphorylated active-site intermediate. The protein is Nucleoside diphosphate kinase of Chlorobium limicola (strain DSM 245 / NBRC 103803 / 6330).